Here is a 117-residue protein sequence, read N- to C-terminus: Immunoglobulin heavy variable 1-69D (117 aa).

An N-terminal signal peptide occupies residues 1 to 19 (MDWTWRFLFVVAAATGVQS). Gln-20 is subject to Pyrrolidone carboxylic acid. The segment at 20-44 (QVQLVQSGAEVKKPGSSVKVSCKAS) is framework-1. The Ig-like domain occupies 20–117 (QVQLVQSGAE…EDTAVYYCAR (98 aa)). A disulfide bridge links Cys-41 with Cys-115. The tract at residues 45-52 (GGTFSSYA) is complementarity-determining-1. Positions 53–69 (ISWVRQAPGQGLEWMGG) are framework-2. A complementarity-determining-2 region spans residues 70–77 (IIPIFGTA). Positions 78 to 115 (NYAQKFQGRVTITADESTSTAYMELSSLRSEDTAVYYC) are framework-3. Residues 116–117 (AR) are complementarity-determining-3.

Immunoglobulins are composed of two identical heavy chains and two identical light chains; disulfide-linked.

It is found in the secreted. Its subcellular location is the cell membrane. V region of the variable domain of immunoglobulin heavy chains that participates in the antigen recognition. Immunoglobulins, also known as antibodies, are membrane-bound or secreted glycoproteins produced by B lymphocytes. In the recognition phase of humoral immunity, the membrane-bound immunoglobulins serve as receptors which, upon binding of a specific antigen, trigger the clonal expansion and differentiation of B lymphocytes into immunoglobulins-secreting plasma cells. Secreted immunoglobulins mediate the effector phase of humoral immunity, which results in the elimination of bound antigens. The antigen binding site is formed by the variable domain of one heavy chain, together with that of its associated light chain. Thus, each immunoglobulin has two antigen binding sites with remarkable affinity for a particular antigen. The variable domains are assembled by a process called V-(D)-J rearrangement and can then be subjected to somatic hypermutations which, after exposure to antigen and selection, allow affinity maturation for a particular antigen. This chain is Immunoglobulin heavy variable 1-69D, found in Homo sapiens (Human).